The following is a 138-amino-acid chain: Large ribosomal subunit protein bL19 (138 aa).

It belongs to the bacterial ribosomal protein bL19 family.

Its function is as follows. This protein is located at the 30S-50S ribosomal subunit interface and may play a role in the structure and function of the aminoacyl-tRNA binding site. This Leptospira interrogans serogroup Icterohaemorrhagiae serovar Lai (strain 56601) protein is Large ribosomal subunit protein bL19.